A 320-amino-acid chain; its full sequence is Short-chain dehydrogenase/reductase ARMGADRAFT_1169971 (320 aa).

The helical transmembrane segment at Lys-19–Ala-39 threads the bilayer. Residues Ile-30, Asp-78, Asn-105, and Lys-136 each coordinate NADP(+). N-linked (GlcNAc...) asparagine glycosylation occurs at Asn-157. Ser-159 (proton donor) is an active-site residue. NADP(+)-binding residues include Tyr-192, Lys-196, Val-227, and Ser-229. Tyr-192 serves as the catalytic Proton acceptor. Catalysis depends on Lys-196, which acts as the Lowers pKa of active site Tyr. A helical transmembrane segment spans residues Leu-235–Ser-255.

The protein belongs to the short-chain dehydrogenases/reductases (SDR) family.

Its subcellular location is the membrane. It participates in secondary metabolite biosynthesis. Functionally, short-chain dehydrogenase/reductase, part of the gene cluster that mediates the biosynthesis of melleolides, a range of antifungal and phytotoxic polyketide derivatives composed of an orsellinic acid (OA) moiety esterified to various sesquiterpene alcohols. The first step in melleolides biosynthesis is performed by the delta(6)-protoilludene synthase PRO1 which catalyzes the cyclization of farnesyl diphosphate to protoilludene. The orsellinic acid synthase armB produces OA by condensing acetyl-CoA with 3 malonyl-CoA units in a three-round chain elongation reaction folowed by a C2-C7 ring closure. ArmB further catalyzes the trans-esterification of OA to the various sesquiterpene alcohols resulting from the hydroxylation of protoilludene. The melleolides cluster also includes 5 cytochrome P450 monooxygenases, 4 NAD(+)-dependent oxidoreductases, one flavin-dependent oxidoreductase, and one O-methyltransferase. The cytochrome P450 monooxygenases may be involved in protoilludene hydroxylation to elaborate melleolides with multiple alcohol groups, such as melleolide D, which carries alcohol functionalities at C-4, C-5, C-10, and C-13. The role of the NAD(+)-dependent enzymes remains unknown. Numerous melleolides, including arnamial, show 5'-O-methylation of the aromatic moiety which may be catalyzed by the methyltransferase encoded in the cluster. The flavin-dependent oxidoreductase might represent the dehydrogenase yielding the aldehyde in position 1 of arnamial and other melleolides. Finally, several halogenase localized outside of the cluster, are able to catalyze the transfer of a single chlorine atom to the melleolide backbone, resulting in a 6'-chloromelleolide product. This is Short-chain dehydrogenase/reductase ARMGADRAFT_1169971 from Armillaria gallica (Bulbous honey fungus).